We begin with the raw amino-acid sequence, 393 residues long: Pyridinium-3,5-bisthiocarboxylic acid mononucleotide nickel insertion protein (393 aa).

It belongs to the LarC family.

The enzyme catalyses Ni(II)-pyridinium-3,5-bisthiocarboxylate mononucleotide = pyridinium-3,5-bisthiocarboxylate mononucleotide + Ni(2+). Functionally, involved in the biosynthesis of a nickel-pincer cofactor ((SCS)Ni(II) pincer complex). Binds Ni(2+), and functions in nickel delivery to pyridinium-3,5-bisthiocarboxylic acid mononucleotide (P2TMN), to form the mature cofactor. Is thus probably required for the activation of nickel-pincer cofactor-dependent enzymes. This Nocardioides sp. (strain ATCC BAA-499 / JS614) protein is Pyridinium-3,5-bisthiocarboxylic acid mononucleotide nickel insertion protein.